The chain runs to 503 residues: Serine/threonine-protein kinase chk-1 (503 aa).

Residues 24–286 (YRVVQTLGEG…IEQIQADPWY (263 aa)) enclose the Protein kinase domain. Residues 30 to 38 (LGEGAFGEV) and Lys54 contribute to the ATP site. Catalysis depends on Asp150, which acts as the Proton acceptor. A disordered region spans residues 320–346 (SAKRRHLETPNEKSTLAERQNASFSQP). Over residues 331-346 (EKSTLAERQNASFSQP) the composition is skewed to polar residues. Ser344 carries the phosphoserine modification.

The protein belongs to the protein kinase superfamily. CAMK Ser/Thr protein kinase family. NIM1 subfamily. Expressed in the germline.

The protein resides in the cytoplasm. It localises to the nucleus. It is found in the perinuclear region. The catalysed reaction is L-seryl-[protein] + ATP = O-phospho-L-seryl-[protein] + ADP + H(+). It catalyses the reaction L-threonyl-[protein] + ATP = O-phospho-L-threonyl-[protein] + ADP + H(+). Serine/threonine-protein kinase which is required for checkpoint-mediated cell cycle arrest and activation of DNA repair in response to the presence of DNA damage or unreplicated DNA. May also negatively regulate cell cycle progression during unperturbed cell cycles. Required for checkpoint mediated cell cycle arrest in response to DNA damage in germline cells. Delays cell-cycle reentry of the Z2 and Z3 primordial germ cells in response to transcription-induced DNA damage as they emerge from cell cycle arrest in L1 larvae. Essential for embryogenesis. The protein is Serine/threonine-protein kinase chk-1 of Caenorhabditis elegans.